Consider the following 248-residue polypeptide: MTLPGEQHLHKIQFYATTAYSCGYLADKPAQSLIATPHHLIDAHAYSGLIQLGFRRSGKFAYRPHCETCHACIPVRLPVAEFQPSRSQRRAWKQHRNLSVALIELAFSEEHFALYSAYQAARHEGSSEDPETVEQYRNFLVQSNVESLMVEFRENGVLKMVSVVDIVRDGISAVYTFYDTADKHASYGTYNILWLLDWCGSLNLPYLYLGYWIKESRKMAYKQNFLPQEGLIDGEWRPIHTERYAQPK.

This sequence belongs to the R-transferase family. Bpt subfamily.

It is found in the cytoplasm. The enzyme catalyses N-terminal L-glutamyl-[protein] + L-leucyl-tRNA(Leu) = N-terminal L-leucyl-L-glutamyl-[protein] + tRNA(Leu) + H(+). It carries out the reaction N-terminal L-aspartyl-[protein] + L-leucyl-tRNA(Leu) = N-terminal L-leucyl-L-aspartyl-[protein] + tRNA(Leu) + H(+). In terms of biological role, functions in the N-end rule pathway of protein degradation where it conjugates Leu from its aminoacyl-tRNA to the N-termini of proteins containing an N-terminal aspartate or glutamate. This chain is Aspartate/glutamate leucyltransferase, found in Methylobacillus flagellatus (strain ATCC 51484 / DSM 6875 / VKM B-1610 / KT).